Reading from the N-terminus, the 109-residue chain is Large ribosomal subunit protein uL24 (109 aa).

Belongs to the universal ribosomal protein uL24 family. Part of the 50S ribosomal subunit.

Its function is as follows. One of two assembly initiator proteins, it binds directly to the 5'-end of the 23S rRNA, where it nucleates assembly of the 50S subunit. In terms of biological role, one of the proteins that surrounds the polypeptide exit tunnel on the outside of the subunit. The chain is Large ribosomal subunit protein uL24 from Legionella pneumophila (strain Corby).